We begin with the raw amino-acid sequence, 492 residues long: N-succinylglutamate 5-semialdehyde dehydrogenase (492 aa).

220 to 225 (GSASTG) is a binding site for NAD(+). Residues glutamate 243 and cysteine 277 contribute to the active site.

Belongs to the aldehyde dehydrogenase family. AstD subfamily.

It catalyses the reaction N-succinyl-L-glutamate 5-semialdehyde + NAD(+) + H2O = N-succinyl-L-glutamate + NADH + 2 H(+). The protein operates within amino-acid degradation; L-arginine degradation via AST pathway; L-glutamate and succinate from L-arginine: step 4/5. Catalyzes the NAD-dependent reduction of succinylglutamate semialdehyde into succinylglutamate. The sequence is that of N-succinylglutamate 5-semialdehyde dehydrogenase from Salmonella paratyphi B (strain ATCC BAA-1250 / SPB7).